Consider the following 360-residue polypeptide: Transcription elongation factor, mitochondrial (360 aa).

The N-terminal 35 residues, 1 to 35 (MSGSVLFTAGERWRCFLTPSRSSLYWALHNFCCRK), are a transit peptide targeting the mitochondrion.

Belongs to the TEFM family. In terms of assembly, interacts with POLRMT.

Its subcellular location is the mitochondrion matrix. It is found in the mitochondrion nucleoid. Functionally, transcription elongation factor which increases mitochondrial RNA polymerase processivity. Regulates transcription of the mitochondrial genome, including genes important for the oxidative phosphorylation machinery. The protein is Transcription elongation factor, mitochondrial (TEFM) of Homo sapiens (Human).